The sequence spans 1036 residues: Potassium-transporting ATPase alpha chain 2 (1036 aa).

The tract at residues 1–50 (MRRKTEIYSVELNGTKDVKPADQRDDKKFKGAKNKDLEPNKSHEKEELKK) is disordered. At 1–99 (MRRKTEIYSV…PNTLTPPKQT (99 aa)) the chain is on the cytoplasmic side. The span at 14 to 50 (GTKDVKPADQRDDKKFKGAKNKDLEPNKSHEKEELKK) shows a compositional bias: basic and acidic residues. Residues 100–120 (PEIIKFLKQMVGGFSILLWIG) traverse the membrane as a helical segment. Topologically, residues 121-143 (AALCWIAFVIQYVNNSASLDNVY) are lumenal. Residues 144-164 (LGAILVLVVILTGIFAYYQEA) traverse the membrane as a helical segment. The Cytoplasmic portion of the chain corresponds to 165–300 (KSTNIMASFS…SEKTPIAIEI (136 aa)). Residues 301 to 320 (EHFVHIVAGVAVSIDIIFFI) form a helical membrane-spanning segment. Topologically, residues 321 to 332 (TAVCMKYYVLDA) are lumenal. The chain crosses the membrane as a helical span at residues 333–350 (IIFLISIIVANVPEGLLA). The Cytoplasmic segment spans residues 351–784 (TVTVTLSLTA…EEGRLIFDNL (434 aa)). The active-site 4-aspartylphosphate intermediate is Asp-388. Mg(2+)-binding residues include Asp-729 and Asp-733. A helical transmembrane segment spans residues 785–804 (KKTIAYTLTKNIAELCPFLI). Over 805–814 (YIVAGLPLPI) the chain is Lumenal. Residues 815 to 835 (GTITILFIDLGTDIIPSIALA) traverse the membrane as a helical segment. Topologically, residues 836-855 (YEKAESDIMNRKPRHKKKDR) are cytoplasmic. The helical transmembrane segment at 856 to 878 (LVNTQLAIYSYLHIGLMQALGGF) threads the bilayer. Over 879–930 (LVYFTVYAQQGFWPTSLINLRVAWETDDINDLEDSYGQEWTRYQRKYLEWTG) the chain is Lumenal. Residues 931–950 (STAFFVAIMIQQIADLIIRK) traverse the membrane as a helical segment. Residues 951-964 (TRRNSIFQQGLFRN) lie on the Cytoplasmic side of the membrane. Ser-955 is subject to Phosphoserine; by PKA. Residues 965 to 983 (KVIWVGIASQVIVALILSY) form a helical membrane-spanning segment. Topologically, residues 984–998 (GLGSVPALSFTMLRV) are lumenal. The chain crosses the membrane as a helical span at residues 999–1019 (QYWFVAVPHAILIWVYDEMRK). The Cytoplasmic segment spans residues 1020 to 1036 (LFIRLYPGSWWDKNMYY).

It belongs to the cation transport ATPase (P-type) (TC 3.A.3) family. Type IIC subfamily. In terms of assembly, the ATPase pump is composed of a catalytic alpha subunit and an auxiliary non-catalytic beta subunit. The alpha subunit pairs with the beta subunit of gastric H(+)/K(+) ATPase ATP4B or the beta subunit of Na(+)/K(+) ATPases ATP1B1 and ATP1B3; this interaction is required for the formation of a functionally active pump and its targeting at the plasma membrane. In terms of tissue distribution, expressed at high levels in distal colon, coagulating and preputial glands; at much lower levels in proximal colon, kidney, uterus, brain, placenta and lung; and at trace levels in heart and forestomach. Expressed in distal colon epithelium (at protein level). Expressed in anterior prostate (at protein level).

It localises to the apical cell membrane. It carries out the reaction K(+)(out) + ATP + H2O + H(+)(in) = K(+)(in) + ADP + phosphate + 2 H(+)(out). It catalyses the reaction K(+)(out) + Na(+)(in) + ATP + H2O = K(+)(in) + Na(+)(out) + ADP + phosphate + H(+). Its activity is regulated as follows. Up-regulated by K(+) ions in a dose-dependent way. Functionally, the catalytic subunit of a H(+)/K(+) ATPase and/or Na(+)/K(+) ATPase pump which transports K(+) ions in exchange for Na(+) and/or H(+) ions across the apical membrane of epithelial cells. Uses ATP as an energy source to pump K(+) ions into the cell while transporting Na(+) and/or H(+) ions to the extracellular compartment. Involved in the maintenance of electrolyte homeostasis through K(+) ion absorption in kidney and colon. In the airway epithelium, may play a primary role in mucus acidification regulating its viscosity and clearance. This is Potassium-transporting ATPase alpha chain 2 (Atp12a) from Rattus norvegicus (Rat).